Reading from the N-terminus, the 287-residue chain is Flagellin (287 aa).

It belongs to the bacterial flagellin family.

The protein localises to the secreted. It localises to the bacterial flagellum. In terms of biological role, flagellin is the subunit protein which polymerizes to form the filaments of bacterial flagella. In Listeria monocytogenes serovar 1/2a (strain ATCC BAA-679 / EGD-e), this protein is Flagellin (flaA).